The sequence spans 324 residues: Beta-ketoacyl-[acyl-carrier-protein] synthase III (324 aa).

Catalysis depends on residues Cys112 and His249. The tract at residues 250–254 is ACP-binding; the sequence is QANRR. Asn279 is an active-site residue.

Belongs to the thiolase-like superfamily. FabH family. Homodimer.

The protein localises to the cytoplasm. It carries out the reaction malonyl-[ACP] + acetyl-CoA + H(+) = 3-oxobutanoyl-[ACP] + CO2 + CoA. Its pathway is lipid metabolism; fatty acid biosynthesis. Catalyzes the condensation reaction of fatty acid synthesis by the addition to an acyl acceptor of two carbons from malonyl-ACP. Catalyzes the first condensation reaction which initiates fatty acid synthesis and may therefore play a role in governing the total rate of fatty acid production. Possesses both acetoacetyl-ACP synthase and acetyl transacylase activities. Its substrate specificity determines the biosynthesis of branched-chain and/or straight-chain of fatty acids. The protein is Beta-ketoacyl-[acyl-carrier-protein] synthase III of Streptococcus pyogenes serotype M1.